The chain runs to 37 residues: Large ribosomal subunit protein bL36c (37 aa).

Belongs to the bacterial ribosomal protein bL36 family.

The protein localises to the plastid. Its subcellular location is the chloroplast. The sequence is that of Large ribosomal subunit protein bL36c from Physcomitrium patens (Spreading-leaved earth moss).